We begin with the raw amino-acid sequence, 349 residues long: GDSL esterase/lipase At1g58525 (349 aa).

Residues 1 to 19 (MKLQILLLALVLIAVEANA) form the signal peptide. N25 carries N-linked (GlcNAc...) asparagine glycosylation. Catalysis depends on S37, which acts as the Nucleophile. N316 is a glycosylation site (N-linked (GlcNAc...) asparagine). Catalysis depends on residues D324 and H327.

This sequence belongs to the 'GDSL' lipolytic enzyme family.

Its subcellular location is the secreted. In Arabidopsis thaliana (Mouse-ear cress), this protein is GDSL esterase/lipase At1g58525.